The chain runs to 533 residues: Ribonuclease Y (533 aa).

The interval 16–41 (VERIRRRAEQDAAEQTERVRREAEQI) is disordered. Residues 22–41 (RAEQDAAEQTERVRREAEQI) show a composition bias toward basic and acidic residues. Positions 223 to 289 (VVSVLHLPSD…RITLTALVSD (67 aa)) constitute a KH domain. The HD domain maps to 349–442 (VLAHLVESAH…TQAADQISGG (94 aa)).

The protein belongs to the RNase Y family.

Endoribonuclease that initiates mRNA decay. In Parafrankia sp. (strain EAN1pec), this protein is Ribonuclease Y.